The following is a 251-amino-acid chain: Ditrans,polycis-undecaprenyl-diphosphate synthase ((2E,6E)-farnesyl-diphosphate specific) (251 aa).

Aspartate 21 is a catalytic residue. Aspartate 21 is a Mg(2+) binding site. Residues 22–25 (GNNR), tryptophan 26, histidine 38, and 66–68 (SSE) contribute to the substrate site. The active-site Proton acceptor is asparagine 69. Substrate contacts are provided by residues tryptophan 70, arginine 72, arginine 189, and 195 to 197 (RIS). Mg(2+) is bound at residue glutamate 208.

The protein belongs to the UPP synthase family. In terms of assembly, homodimer. Requires Mg(2+) as cofactor.

The catalysed reaction is 8 isopentenyl diphosphate + (2E,6E)-farnesyl diphosphate = di-trans,octa-cis-undecaprenyl diphosphate + 8 diphosphate. In terms of biological role, catalyzes the sequential condensation of isopentenyl diphosphate (IPP) with (2E,6E)-farnesyl diphosphate (E,E-FPP) to yield (2Z,6Z,10Z,14Z,18Z,22Z,26Z,30Z,34E,38E)-undecaprenyl diphosphate (di-trans,octa-cis-UPP). UPP is the precursor of glycosyl carrier lipid in the biosynthesis of bacterial cell wall polysaccharide components such as peptidoglycan and lipopolysaccharide. The polypeptide is Ditrans,polycis-undecaprenyl-diphosphate synthase ((2E,6E)-farnesyl-diphosphate specific) (Pseudomonas putida (strain ATCC 47054 / DSM 6125 / CFBP 8728 / NCIMB 11950 / KT2440)).